A 149-amino-acid chain; its full sequence is CyanoQ (149 aa).

The N-terminal stretch at 1 to 21 is a signal peptide; sequence MSRLRSLLSLILVLVTTVLVS. Cys22 carries the N-palmitoyl cysteine lipid modification. A lipid anchor (S-diacylglycerol cysteine) is attached at Cys22.

Belongs to the PsbQ family. CyanoQ subfamily. PSII is composed of 1 copy each of membrane proteins PsbA, PsbB, PsbC, PsbD, PsbE, PsbF, PsbH, PsbI, PsbJ, PsbK, PsbL, PsbM, PsbT, PsbX, PsbY, PsbZ, Psb30/Ycf12, peripheral proteins PsbO, CyanoQ (PsbQ), PsbU, PsbV and a large number of cofactors. It forms dimeric complexes. Pull-down experiments with His-tagged PsbQ pull down dimeric, but not monomeric, PSII. The N-terminus is blocked. Upon expression in E.coli the N-terminus is modified with a diacylglycerol and an acyl group bound to two palmitates and one palmitoleate.

Its subcellular location is the cellular thylakoid membrane. Functionally, one of the extrinsic, lumenal subunits of photosystem II (PSII), which stabilize and protect the oxygen-evolving complex. PSII is a light-driven water plastoquinone oxidoreductase, using light energy to abstract electrons from H(2)O, generating a proton gradient subsequently used for ATP formation. Plays a role in the stability of the oxygen-evolving center on the luminal side of PSII. Required for optimal photoautotrophic growth in the absence of Ca(2+) or Cl(-), functions in optimizing PSII water oxidation/O(2) evolving activity. Requires PsbO to bind to PSII. The polypeptide is CyanoQ (Synechocystis sp. (strain ATCC 27184 / PCC 6803 / Kazusa)).